The sequence spans 149 residues: Large ribosomal subunit protein eL19 (149 aa).

The interval 46–99 (EDGTIEAKTAKGNSRGRARKRQQKRAYGHKKGHGSRKGRSGGRQNEKEDWQSRI) is disordered. Residues 59–85 (SRGRARKRQQKRAYGHKKGHGSRKGRS) show a composition bias toward basic residues. Residues 89–99 (QNEKEDWQSRI) show a composition bias toward basic and acidic residues.

The protein belongs to the eukaryotic ribosomal protein eL19 family. As to quaternary structure, part of the 50S ribosomal subunit.

Its function is as follows. Binds to the 23S rRNA. This is Large ribosomal subunit protein eL19 from Natronomonas pharaonis (strain ATCC 35678 / DSM 2160 / CIP 103997 / JCM 8858 / NBRC 14720 / NCIMB 2260 / Gabara) (Halobacterium pharaonis).